The chain runs to 287 residues: Protease HtpX (287 aa).

Helical transmembrane passes span 4–24 and 33–53; these read IFLL…VMSI and GGLL…SLAI. H139 lines the Zn(2+) pocket. The active site involves E140. Position 143 (H143) interacts with Zn(2+). 2 helical membrane passes run 154–174 and 195–215; these read LIQG…AGII and AVVF…VAYF. A Zn(2+)-binding site is contributed by E220.

This sequence belongs to the peptidase M48B family. Zn(2+) serves as cofactor.

It is found in the cell inner membrane. This Shewanella baltica (strain OS223) protein is Protease HtpX.